A 260-amino-acid chain; its full sequence is MKLGVNIDHVAVLREARKVNDPDILNALYVATQNGADQITIHLREDRRHIQDADAYAIMKYSNVGVNLECSINRAILDIVTDLKPHRTTLVPEKREEVTTEGGLDVVGHEDEIAYAIELLHDYLIPVSLFIDPTIEAVEKSKELGAEMVELHTGAFANLYAMLSSSLPHSNHSIKELELPRHELSIRLEKSILAIDEAAKHAKKIGLEVAAGHGLNYHNVHEMMKIAEITELNIGQSIVARSIFSGLGEAVKEMKRLTSR.

Asn-6 contacts 3-amino-2-oxopropyl phosphate. 8 to 9 (DH) is a 1-deoxy-D-xylulose 5-phosphate binding site. Arg-17 is a 3-amino-2-oxopropyl phosphate binding site. His-42 acts as the Proton acceptor in catalysis. 1-deoxy-D-xylulose 5-phosphate contacts are provided by Arg-44 and His-49. Glu-69 acts as the Proton acceptor in catalysis. A 1-deoxy-D-xylulose 5-phosphate-binding site is contributed by Thr-99. Catalysis depends on His-213, which acts as the Proton donor. 3-amino-2-oxopropyl phosphate-binding positions include Gly-214 and 235–236 (GQ).

It belongs to the PNP synthase family. As to quaternary structure, homooctamer; tetramer of dimers.

It is found in the cytoplasm. It catalyses the reaction 3-amino-2-oxopropyl phosphate + 1-deoxy-D-xylulose 5-phosphate = pyridoxine 5'-phosphate + phosphate + 2 H2O + H(+). Its pathway is cofactor biosynthesis; pyridoxine 5'-phosphate biosynthesis; pyridoxine 5'-phosphate from D-erythrose 4-phosphate: step 5/5. Catalyzes the complicated ring closure reaction between the two acyclic compounds 1-deoxy-D-xylulose-5-phosphate (DXP) and 3-amino-2-oxopropyl phosphate (1-amino-acetone-3-phosphate or AAP) to form pyridoxine 5'-phosphate (PNP) and inorganic phosphate. The chain is Pyridoxine 5'-phosphate synthase from Sulfurimonas denitrificans (strain ATCC 33889 / DSM 1251) (Thiomicrospira denitrificans (strain ATCC 33889 / DSM 1251)).